Here is a 409-residue protein sequence, read N- to C-terminus: Microfibrillar-associated protein 3-like (409 aa).

Positions 1 to 28 are cleaved as a signal peptide; sequence MDRLKSHLTVCFLPSVPFLILVSTLATA. Topologically, residues 29–149 are extracellular; it reads KSVTNSTLNG…LRVIFTSGDM (121 aa). N-linked (GlcNAc...) asparagine glycans are attached at residues N33, N37, N67, N111, and N135. Residues 47 to 141 form the Ig-like C2-type domain; sequence PVIIARTDHI…GTVNNTVTLR (95 aa). The cysteines at positions 68 and 125 are disulfide-linked. The helical transmembrane segment at 150-172 threads the bilayer; the sequence is GVYYMVVCLVAFTIVMVLNITRL. The Cytoplasmic portion of the chain corresponds to 173–409; that stretch reads CMMSSHLKKT…NTCIIYESHV (237 aa). Y287 is modified (phosphotyrosine; by EGFR). 2 disordered regions span residues 292–311 and 320–385; these read SLKR…LHEQ and SVHP…VLPP. Phosphoserine is present on residues S298, S303, S306, and S307. Residues 339–355 are compositionally biased toward basic and acidic residues; it reads EVKDVEETELSAEHSPE. Positions 363–377 are enriched in low complexity; the sequence is VTSTELTSEEPTPVE.

In terms of tissue distribution, highly expressed in testis.

It localises to the cell membrane. Its subcellular location is the nucleus. It is found in the cytoplasm. In terms of biological role, may participate in the nuclear signaling of EGFR and MAPK1/ERK2. May a have a role in metastasis. This is Microfibrillar-associated protein 3-like (MFAP3L) from Homo sapiens (Human).